The sequence spans 282 residues: Alpha/beta-gliadin A-III (282 aa).

An N-terminal signal peptide occupies residues 1 to 20; the sequence is MKTFLILALLAIVATTATSA. Residues 27 to 59 show a composition bias toward low complexity; sequence QLQPQNPSQQQPQEQVPLMQQQQQFPGQQEQFP. Disordered stretches follow at residues 27 to 122 and 220 to 240; these read QLQP…AQQQ and SGQVSFQSSQQNPQAQGSVQP. The segment covering 60-111 has biased composition (pro residues); sequence PQQPYPHQQPFPSQQPYPQPQPFPPQLPYPQTQPFPPQQPYPQPQPQYPQPQ. Low complexity predominate over residues 112-122; that stretch reads QPISQQQAQQQ. Polar residues predominate over residues 224–240; the sequence is SFQSSQQNPQAQGSVQP.

Belongs to the gliadin/glutenin family. Post-translationally, substrate of transglutaminase.

Functionally, gliadin is the major seed storage protein in wheat. In Triticum aestivum (Wheat), this protein is Alpha/beta-gliadin A-III.